The following is a 441-amino-acid chain: Ribosomal protein uS12 methylthiotransferase RimO (441 aa).

Residues 6–116 form the MTTase N-terminal domain; that stretch reads QKVGIVSLGC…VVAAVHEAAP (111 aa). [4Fe-4S] cluster-binding residues include C15, C51, C80, C147, C151, and C154. Positions 133–370 constitute a Radical SAM core domain; sequence LTPRHYAYLK…MAAQQEISER (238 aa). Positions 373-439 constitute a TRAM domain; it reads AQKVGTVIEA…EYDLWGSLAG (67 aa).

This sequence belongs to the methylthiotransferase family. RimO subfamily. The cofactor is [4Fe-4S] cluster.

It is found in the cytoplasm. It catalyses the reaction L-aspartate(89)-[ribosomal protein uS12]-hydrogen + (sulfur carrier)-SH + AH2 + 2 S-adenosyl-L-methionine = 3-methylsulfanyl-L-aspartate(89)-[ribosomal protein uS12]-hydrogen + (sulfur carrier)-H + 5'-deoxyadenosine + L-methionine + A + S-adenosyl-L-homocysteine + 2 H(+). In terms of biological role, catalyzes the methylthiolation of an aspartic acid residue of ribosomal protein uS12. This chain is Ribosomal protein uS12 methylthiotransferase RimO, found in Rhodospirillum rubrum (strain ATCC 11170 / ATH 1.1.1 / DSM 467 / LMG 4362 / NCIMB 8255 / S1).